The primary structure comprises 1687 residues: Zinc finger protein 142 (1687 aa).

Disordered regions lie at residues 1–23 (MTDPLLDSQPASSTGEMDGLCPE) and 83–150 (TLTP…RLEG). Basic and acidic residues predominate over residues 125–140 (KEEKSDTQKDSQKAVD). Position 154 is a phosphoserine (S154). 3 C2H2-type zinc fingers span residues 163 to 185 (HMCPECKRCFKKRTHLVEHLHLH), 219 to 242 (HHCPLCHYSAVERNALNRHMASMH), and 253 to 275 (YACPVCREEFRLSQALKEHLKSH). A C2H2-type 4; atypical zinc finger spans residues 286-311 (LRCFQEGCSYAAPDRKAFIKHLKETH). C2H2-type zinc fingers lie at residues 316–340 (VECRHHSCPMLFATAEAMEAHHKSH), 343–366 (FHCPHCDFACSNKHLFRKHKKQGH), 372–395 (LRCTFCPFATFNPVAYQDHVGKMH), 401–423 (HQCPECNFATAHKRVLIRHMLLH), 429–451 (HKCELCDFTCRDVSYLSKHMLTH), 457–479 (YMCTECGYVTKWKHYLRVHMRKH), 485–507 (YQCNQCSYRCHRADQLSSHKLRH), 512–536 (LMCEVCAFACKRKYELQKHMASQHH), 544–567 (YPCHYCSYQSRHKQAVLSHENCKH), and 573–596 (FHCALCDYRTFSNTTLLFHKRKAH). K594 participates in a covalent cross-link: Glycyl lysine isopeptide (Lys-Gly) (interchain with G-Cter in SUMO2). Disordered regions lie at residues 613–690 (EPEG…EVEE), 704–798 (LESV…PPLP), 897–935 (KGLPRPDSPIPLQPVLPGTQASEDTESGKPPPASQEAEL), 947–1014 (REPE…SPTE), and 1052–1092 (GRGG…GDGD). Residues 725–739 (PLGLEGPDGLEGPEL) show a composition bias toward low complexity. Residues 1061–1075 (TPQTQPDVSPLSNGD) show a composition bias toward polar residues. A compositionally biased stretch (low complexity) spans 1082 to 1092 (GSTESSSGDGD). 15 C2H2-type zinc fingers span residues 1135–1158 (LHCSLCPFTAPAATALRLHQKRRH), 1171–1194 (LQCGDCGFTCKQSRCMQQHRRLKH), 1200–1222 (HQCPFCDFSTTRRYRLEAHQSRH), 1228–1251 (IPCSSCPQTFGTNSKLRLHRLRVH), 1257–1280 (HFCPLCDYSGYLRHDITRHVNSCH), 1286–1309 (FACSQCEAQFSSETALKQHALRRH), 1328–1351 (LHCSRCGLLCPSPASLRGHTRKQH), 1354–1377 (LECGACQEAFPSRLALDEHRRQQH), 1380–1403 (HRCQLCDFAARERVGLVKHYLEQH), 1424–1446 (LHCPFCDFTCRHQLVLDHHVKGH), 1452–1474 (YKCTDCAYSTKNRQKITWHSRIH), 1480–1502 (YHCHLCPYACADPSRLKYHMRIH), 1508–1530 (YLCPECGYKCKWVNQLKYHMTKH), 1536–1559 (YQCPECEYCTNRADALRVHQETRH), and 1565–1587 (FMCEQCGKAFKTRFLLRTHLRKH). K1193 is covalently cross-linked (Glycyl lysine isopeptide (Lys-Gly) (interchain with G-Cter in SUMO2)). Residue K1242 forms a Glycyl lysine isopeptide (Lys-Gly) (interchain with G-Cter in SUMO2) linkage. K1591 participates in a covalent cross-link: Glycyl lysine isopeptide (Lys-Gly) (interchain with G-Cter in SUMO2). 2 C2H2-type zinc fingers span residues 1593–1615 (YVCNVCHRAFRWAAGLRHHALTH) and 1621–1643 (FFCRLCNYKAKQKFQVVKHVRRH). The disordered stretch occupies residues 1638-1687 (KHVRRHHPDQADPNQGVGKDPTTPTVHLHDVQLEDPSPPAPAAPHTGPEG).

Belongs to the krueppel C2H2-type zinc-finger protein family.

Its subcellular location is the nucleus. Functionally, may be involved in transcriptional regulation. This is Zinc finger protein 142 from Homo sapiens (Human).